We begin with the raw amino-acid sequence, 490 residues long: Phosphoglucosamine mutase (490 aa).

Ser-139 functions as the Phosphoserine intermediate in the catalytic mechanism. 4 residues coordinate Mg(2+): Ser-139, Asp-279, Asp-281, and Asp-283. A Phosphoserine modification is found at Ser-139.

The protein belongs to the phosphohexose mutase family. Mg(2+) serves as cofactor. Post-translationally, activated by phosphorylation.

It carries out the reaction alpha-D-glucosamine 1-phosphate = D-glucosamine 6-phosphate. Functionally, catalyzes the conversion of glucosamine-6-phosphate to glucosamine-1-phosphate. The chain is Phosphoglucosamine mutase from Trichormus variabilis (strain ATCC 29413 / PCC 7937) (Anabaena variabilis).